The sequence spans 390 residues: Acetate kinase (390 aa).

Asn10 provides a ligand contact to Mg(2+). Residue Lys17 participates in ATP binding. Substrate is bound at residue Arg89. Asp146 serves as the catalytic Proton donor/acceptor. ATP is bound by residues 204–208, 278–280, and 323–327; these read HLGNG, DMR, and GIGEN. Mg(2+) is bound at residue Glu376.

It belongs to the acetokinase family. Homodimer. The cofactor is Mg(2+). Mn(2+) is required as a cofactor.

Its subcellular location is the cytoplasm. The catalysed reaction is acetate + ATP = acetyl phosphate + ADP. It participates in metabolic intermediate biosynthesis; acetyl-CoA biosynthesis; acetyl-CoA from acetate: step 1/2. Functionally, catalyzes the formation of acetyl phosphate from acetate and ATP. Can also catalyze the reverse reaction. This is Acetate kinase from Mycoplasma pneumoniae (strain ATCC 29342 / M129 / Subtype 1) (Mycoplasmoides pneumoniae).